A 487-amino-acid chain; its full sequence is Acetyl-coenzyme A carboxylase carboxyl transferase subunit beta, chloroplastic (487 aa).

The CoA carboxyltransferase N-terminal domain occupies 223–487 (LWIQCDNCYG…FCPLNKTEIK (265 aa)). Zn(2+)-binding residues include cysteine 227, cysteine 230, cysteine 243, and cysteine 246. The segment at 227-246 (CDNCYGLMYKKVKMNVCEQC) adopts a C4-type zinc-finger fold.

It belongs to the AccD/PCCB family. In terms of assembly, acetyl-CoA carboxylase is a heterohexamer composed of biotin carboxyl carrier protein, biotin carboxylase and 2 subunits each of ACCase subunit alpha and ACCase plastid-coded subunit beta (accD). The cofactor is Zn(2+).

It is found in the plastid. It localises to the chloroplast stroma. The catalysed reaction is N(6)-carboxybiotinyl-L-lysyl-[protein] + acetyl-CoA = N(6)-biotinyl-L-lysyl-[protein] + malonyl-CoA. It participates in lipid metabolism; malonyl-CoA biosynthesis; malonyl-CoA from acetyl-CoA: step 1/1. Component of the acetyl coenzyme A carboxylase (ACC) complex. Biotin carboxylase (BC) catalyzes the carboxylation of biotin on its carrier protein (BCCP) and then the CO(2) group is transferred by the transcarboxylase to acetyl-CoA to form malonyl-CoA. This chain is Acetyl-coenzyme A carboxylase carboxyl transferase subunit beta, chloroplastic, found in Nasturtium officinale (Watercress).